Here is a 524-residue protein sequence, read N- to C-terminus: M phase phosphoprotein 10 (524 aa).

The short motif at 85–92 is the Nuclear localization signal 1 element; it reads VKRFAKNP. Disordered regions lie at residues 100–243 and 259–283; these read KLAL…KLGK and KLKD…STHE. The span at 109 to 168 shows a compositional bias: acidic residues; sequence DDIDEMDMDGFDSDDVDDEDKEIESNDSEGEDEEEEEEDEEEEEEEEEEEEEEKDGDNEG. A coiled-coil region spans residues 131-165; sequence IESNDSEGEDEEEEEEDEEEEEEEEEEEEEEKDGD. Residues 169 to 180 show a composition bias toward basic and acidic residues; that stretch reads IEDKFFKIKELE. The span at 181 to 191 shows a compositional bias: acidic residues; sequence EFLEEGEAEEY. A compositionally biased stretch (basic residues) spans 196 to 207; sequence KNKKGVAQRKKQ. Over residues 210–238 the composition is skewed to acidic residues; the sequence is SDDEDEEDDDDEEEDVEFDAFAGGDDEET. Residues 257 to 302 adopt a coiled-coil conformation; the sequence is KMKLKDLSEDEEAEIENKGNEKLSTHERARLKLQSKIEQMEKANLD. The span at 271–283 shows a compositional bias: basic and acidic residues; it reads IENKGNEKLSTHE. Residues 373-380 carry the Nuclear localization signal 2 motif; the sequence is GKREAKEL. The segment at 479–524 is disordered; it reads KGDIKDESELTQEDRKRRRANKKRKFKAESANEPPKKALDTSTKNP. Residues 480–493 show a composition bias toward basic and acidic residues; that stretch reads GDIKDESELTQEDR. Over residues 494–504 the composition is skewed to basic residues; sequence KRRRANKKRKF. Residues 505 to 517 are compositionally biased toward basic and acidic residues; sequence KAESANEPPKKAL.

It belongs to the MPP10 family. Component of the ribosomal small subunit (SSU) processome. Interacts with THAL in the nucleus.

It localises to the nucleus. Its subcellular location is the nucleolus. Functionally, involved in nucleolar processing of pre-18S ribosomal RNA. The chain is M phase phosphoprotein 10 from Arabidopsis thaliana (Mouse-ear cress).